Here is a 318-residue protein sequence, read N- to C-terminus: Peroxisomal and mitochondrial division factor 1 (318 aa).

Residues 1 to 39 (MADVEDRAAKGISDYDQGGVKTTELERKIEDMENKNQEL) form a disordered region. Residues 1–291 (MADVEDRAAK…QKGSLEAEYQ (291 aa)) are Cytoplasmic-facing. Residues 19-260 (GVKTTELERK…KKVEEGNKTV (242 aa)) adopt a coiled-coil conformation. Basic and acidic residues predominate over residues 23–39 (TELERKIEDMENKNQEL). A helical transmembrane segment spans residues 292–312 (WPVVAAGSVGAAGLVAATFFV). Residues 313–318 (CYSKLR) lie on the Mitochondrial intermembrane side of the membrane.

Homodimer. Interacts with PMD2.

It is found in the peroxisome membrane. The protein resides in the mitochondrion outer membrane. In terms of biological role, involved in morphogenesis and proliferation of peroxisomes and mitochondria, independently from the previously defined pathway controlled by the FIS1-DRP3 complex. The sequence is that of Peroxisomal and mitochondrial division factor 1 from Arabidopsis thaliana (Mouse-ear cress).